A 333-amino-acid chain; its full sequence is Calcium uniporter protein, mitochondrial (333 aa).

The N-terminal 22 residues, 1–22, are a transit peptide targeting the mitochondrion; sequence MRNGRCLVTPFVTAQRLANLRN. Over 23 to 214 the chain is Mitochondrial matrix; the sequence is TLWNRQQIAF…QECEAHTDRV (192 aa). A coiled-coil region spans residues 180-193; it reads KKLLLQLENAETLL. Residues 195 to 213 are outer juxtamembrane helix (OJMH); the sequence is PLHDAKRKIEQECEAHTDR. A helical transmembrane segment spans residues 215 to 234; it reads MWAGFAAMGVQTGLFARLTW. The Mitochondrial intermembrane portion of the chain corresponds to 235–243; that stretch reads WEYSWDIME. The short motif at 239–247 is the Selectivity filter element; sequence WDIMEPVTY. Glu-243 provides a ligand contact to Ca(2+). Residues 244–260 form a helical membrane-spanning segment; the sequence is PVTYFATYSTVCATFGY. At 261–333 the chain is on the mitochondrial matrix side; it reads YLYTQQSFEY…SYLSNLEAEK (73 aa). The interval 262-271 is inner juxtamembrane helix (IJMH); sequence LYTQQSFEYP. The stretch at 289–316 forms a coiled coil; sequence QNFDIEKYNRLVTEVDELRNQLKRMRDP.

The protein belongs to the MCU (TC 1.A.77) family.

It is found in the mitochondrion inner membrane. It carries out the reaction Ca(2+)(in) = Ca(2+)(out). With respect to regulation, inhibited by ruthenium red or its derivative Ru360; possibly by obstructing the pore. Its function is as follows. Mitochondrial inner membrane calcium uniporter that mediates calcium uptake into mitochondria. Constitutes a pore-forming and calcium-conducting subunit. Mitochondrial calcium homeostasis plays key roles in cellular physiology and regulates cell bioenergetics, cytoplasmic calcium signals and activation of cell death pathways. Required for rapid mitochondrial calcium uptake and mitochondrial reactive oxygen species (mtROS) production after wounding. In addition, together with mitochondrial calcium regulator micu-1, required for mitochondrial calcium uptake following axon injury in PLM touch receptor neurons. The chain is Calcium uniporter protein, mitochondrial from Caenorhabditis elegans.